Here is a 126-residue protein sequence, read N- to C-terminus: uncharacterized protein (126 aa).

The 99-residue stretch at 8 to 106 (ISVEATLEVI…WGANHINRVY (99 aa)) folds into the HTH hxlR-type domain.

This is an uncharacterized protein from Bacillus subtilis (strain 168).